Consider the following 804-residue polypeptide: Phenylalanine--tRNA ligase beta subunit (804 aa).

Residues 39–155 form the tRNA-binding domain; sequence EEGLKKLVVG…ADVKPGQDVY (117 aa). The region spanning 408–483 is the B5 domain; it reads REPVVVKTTV…RIYGYDNLKS (76 aa). Residues aspartate 461, aspartate 467, glutamate 470, and glutamate 471 each contribute to the Mg(2+) site. The 94-residue stretch at 711–804 folds into the FDX-ACB domain; that stretch reads PKFPAIERDL…LENDLDIKVR (94 aa).

It belongs to the phenylalanyl-tRNA synthetase beta subunit family. Type 1 subfamily. Tetramer of two alpha and two beta subunits. It depends on Mg(2+) as a cofactor.

The protein localises to the cytoplasm. The enzyme catalyses tRNA(Phe) + L-phenylalanine + ATP = L-phenylalanyl-tRNA(Phe) + AMP + diphosphate + H(+). The sequence is that of Phenylalanine--tRNA ligase beta subunit from Lactobacillus acidophilus (strain ATCC 700396 / NCK56 / N2 / NCFM).